Reading from the N-terminus, the 878-residue chain is MPEIDARLREDVHQLGELLGDTIREQYGPAFLDKIERIRKGAKAARRGSAEGAQQLTATLDGLEESELLPVARAFNQFLNLANIAEQYHRIRRRRPNEPEPFENLALEELLGRLKDAGHAPGQLARQLAGLEIELVLTAHPTEVARRTLIQKYDAITAQLATKDHADLLPEERSRIQRRLQRLVAEVWHTDEIRKVRPTPVDEAKWGFAVIEHSLWEALPNVLRHVDEVLLRSTGERLPLSAAPLRFASWMGGDRDGNPNVTAGVTREVLLLARWMAADLYLRDIDRLAAELSMQEASPALLARVGDSAEPYRALLKQLRERLRLTRSWTHQALAGEVPAAEGVLEHNRDLVEPLQLCHESLHACGMGVIADGALLDCLRRAATFGLFLVRLDVRQDAGRHAAALSEITEYLELGSYAEWDEKTRLEFLLEELNSRRPLLPAHYQPSAETAEVLATCRAIAAAPPASLGSYVISMAGQPSDVLAVQLLLKESGVDWPMRVVPLFETLDDLDNAGPCMERLLTLPGYRSRLSGVQEVMIGYSDSAKDAGTLTAAWAQYRAQEKLVEICRHHEVELLLFHGRGGTVGRGGGPAHAAILSQPPGSVAGRFRVTEQGEMIRFKFGLPDIAEQNLNLYLAAVLEATLMPPPAPEPAWRAQMDRLAKDALHAYRRVVRDDPQFVEYFRLATPEQELGRLPLGSRPAKRREGGVESLRAIPWIFAWTQTRLMLPAWLGWETALLNAIERGEGALLGQMRERWPFFTTRIDMLEMVLAKADADIARLYDERLVPLELRPLGRRLRDLLSQAVRVVLGLTGQSLLLAHASETRESISVRNSYLDPLHLLQAELLARSRRCRGDACGGLEQALLVTVAGIAAGLRNTG.

Catalysis depends on residues H140 and K545.

It belongs to the PEPCase type 1 family. Requires Mg(2+) as cofactor.

The enzyme catalyses oxaloacetate + phosphate = phosphoenolpyruvate + hydrogencarbonate. Functionally, forms oxaloacetate, a four-carbon dicarboxylic acid source for the tricarboxylic acid cycle. The polypeptide is Phosphoenolpyruvate carboxylase (Pseudomonas paraeruginosa (strain DSM 24068 / PA7) (Pseudomonas aeruginosa (strain PA7))).